A 131-amino-acid polypeptide reads, in one-letter code: uncharacterized protein (131 aa).

An N-terminal signal peptide occupies residues 1–26 (MKKIVAAIVVIGLVFIAFFYLYSRSG).

This is an uncharacterized protein from Bacillus subtilis (strain 168).